Here is a 61-residue protein sequence, read N- to C-terminus: Protein TfaX (61 aa).

It belongs to the tfa family.

In terms of biological role, might play a role in cell growth during glycolysis. This Escherichia coli (strain K12) protein is Protein TfaX (tfaX).